The chain runs to 352 residues: 3-isopropylmalate dehydrogenase (352 aa).

Residue 71-87 (GAHDSAWNQLPRHLRPE) participates in NAD(+) binding. Arginine 94, arginine 104, arginine 132, and aspartate 218 together coordinate substrate. Mg(2+) contacts are provided by aspartate 218, aspartate 242, and aspartate 246. NAD(+) is bound at residue 275-287 (GSAPDIAGQGVAN).

This sequence belongs to the isocitrate and isopropylmalate dehydrogenases family. LeuB type 1 subfamily. In terms of assembly, homodimer. Mg(2+) is required as a cofactor. Requires Mn(2+) as cofactor.

The protein localises to the cytoplasm. The catalysed reaction is (2R,3S)-3-isopropylmalate + NAD(+) = 4-methyl-2-oxopentanoate + CO2 + NADH. The protein operates within amino-acid biosynthesis; L-leucine biosynthesis; L-leucine from 3-methyl-2-oxobutanoate: step 3/4. Its function is as follows. Catalyzes the oxidation of 3-carboxy-2-hydroxy-4-methylpentanoate (3-isopropylmalate) to 3-carboxy-4-methyl-2-oxopentanoate. The product decarboxylates to 4-methyl-2 oxopentanoate. The chain is 3-isopropylmalate dehydrogenase from Deinococcus radiodurans (strain ATCC 13939 / DSM 20539 / JCM 16871 / CCUG 27074 / LMG 4051 / NBRC 15346 / NCIMB 9279 / VKM B-1422 / R1).